The primary structure comprises 478 residues: Adenosylhomocysteinase (478 aa).

Thr-56, Asp-139, and Glu-201 together coordinate substrate. Position 202-204 (Thr-202–Thr-204) interacts with NAD(+). Substrate contacts are provided by Lys-231 and Asp-235. NAD(+)-binding positions include Asn-236, Gly-265–Gly-270, Glu-288, Asn-323, Ile-344–His-346, and Asn-392.

Belongs to the adenosylhomocysteinase family. NAD(+) is required as a cofactor.

The protein localises to the cytoplasm. It carries out the reaction S-adenosyl-L-homocysteine + H2O = L-homocysteine + adenosine. Its pathway is amino-acid biosynthesis; L-homocysteine biosynthesis; L-homocysteine from S-adenosyl-L-homocysteine: step 1/1. Its function is as follows. May play a key role in the regulation of the intracellular concentration of adenosylhomocysteine. In Corynebacterium diphtheriae (strain ATCC 700971 / NCTC 13129 / Biotype gravis), this protein is Adenosylhomocysteinase.